The following is a 387-amino-acid chain: Protoheme IX farnesyltransferase, mitochondrial (387 aa).

8 helical membrane-spanning segments follow: residues 95–115 (LTVL…YPGL), 117–137 (FNTL…ANAF), 183–203 (FLVN…YMGI), 212–232 (IVNT…GWAA), 242–262 (PGGL…FNAF), 284–306 (ALNA…AYIS), 311–330 (GPWY…ARAW), and 345–365 (FFAS…CHMI).

It belongs to the UbiA prenyltransferase family.

The protein localises to the mitochondrion membrane. The catalysed reaction is heme b + (2E,6E)-farnesyl diphosphate + H2O = Fe(II)-heme o + diphosphate. Its function is as follows. Converts protoheme IX and farnesyl diphosphate to heme O. The protein is Protoheme IX farnesyltransferase, mitochondrial (cox10) of Schizosaccharomyces pombe (strain 972 / ATCC 24843) (Fission yeast).